The primary structure comprises 45 residues: MADSNCGCGSSCKCGDSCSCEKNYNKECDNCSCGSNCSCGSNCNC.

The protein belongs to the metallothionein superfamily. Type 15 family. As to expression, expressed in phloem and mesophyll cells of leaves, vascular tissues of cotyledons, sepals and petals. Expressed in anthers. Expressed in root endodermis and at lower levels in cortex of mature region of roots.

Functionally, metallothioneins have a high content of cysteine residues that bind various heavy metals. Functions as a metal chelator of copper (Cu) and zinc (Zn). Plays a role in Cu homeostasis in the roots under elevated Cu concentration. Functions cooperatively with the phytochelatin synthase PCS1 to protect plants from Cu and cadmium (Cd) toxicity. Plays a role in Cu homeostasis, specifically in the remobilization of Cu from senescing leaves. The mobilization of Cu from internal sources is important for seed development. Confers tolerance to Cd and plays a role in Cd and Zn homeostasis. The protein is Metallothionein-like protein 1A (MT1A) of Arabidopsis thaliana (Mouse-ear cress).